Reading from the N-terminus, the 323-residue chain is Secreted frizzled-related protein 3 (323 aa).

The first 32 residues, 1-32, serve as a signal peptide directing secretion; that stretch reads MVCCGPGRMLLGWAGLLVLAALCLLQVPGAQA. The FZ domain maps to 33 to 150; sequence AACEPVRIPL…VYDRGVCISP (118 aa). 5 disulfide bridges follow: Cys-35/Cys-96, Cys-43/Cys-89, Cys-80/Cys-119, Cys-108/Cys-147, and Cys-112/Cys-136. The N-linked (GlcNAc...) asparagine glycan is linked to Asn-49. The region spanning 178 to 298 is the NTR domain; the sequence is CKCKPVRATQ…WDMKLRHLGL (121 aa). A disordered region spans residues 299 to 323; sequence GKTDASDSTQNQKSGRNSNPRPARS. Positions 304–323 are enriched in polar residues; that stretch reads SDSTQNQKSGRNSNPRPARS.

This sequence belongs to the secreted frizzled-related protein (sFRP) family. In terms of assembly, interacts with MYOC. Expressed in kidney, brain, testis. Weak expression in spleen and heart.

The protein resides in the secreted. Its function is as follows. Soluble frizzled-related proteins (sFRPS) function as modulators of Wnt signaling through direct interaction with Wnts. They have a role in regulating cell growth and differentiation in specific cell types. SFRP3/FRZB appears to be involved in limb skeletogenesis. Antagonist of Wnt8 signaling. Regulates chondrocyte maturation and long bone development. This is Secreted frizzled-related protein 3 (Frzb) from Mus musculus (Mouse).